The sequence spans 157 residues: MSETERTLVIIKPDAVVRGLIGEIISRFEKKGLKIVGMKMIWIDRELAEKHYEEHREKPFFKALIDYITKTPVVVMVLEGRYAVEVVRKMAGATDPKDAAPGTIRGDFGLEVSDAICNVIHASDSKESAEREISLFFKPEELFEYPRAADWFYKKGI.

Residues Lys12, Phe60, Arg88, Thr94, and Arg105 each contribute to the ATP site. Catalysis depends on His121, which acts as the Pros-phosphohistidine intermediate.

The protein belongs to the NDK family. It depends on Mg(2+) as a cofactor.

It is found in the cytoplasm. It carries out the reaction a 2'-deoxyribonucleoside 5'-diphosphate + ATP = a 2'-deoxyribonucleoside 5'-triphosphate + ADP. The catalysed reaction is a ribonucleoside 5'-diphosphate + ATP = a ribonucleoside 5'-triphosphate + ADP. Its function is as follows. Major role in the synthesis of nucleoside triphosphates other than ATP. The ATP gamma phosphate is transferred to the NDP beta phosphate via a ping-pong mechanism, using a phosphorylated active-site intermediate. This is Nucleoside diphosphate kinase from Pyrococcus horikoshii (strain ATCC 700860 / DSM 12428 / JCM 9974 / NBRC 100139 / OT-3).